A 354-amino-acid polypeptide reads, in one-letter code: uncharacterized protein (354 aa).

The region spanning 48 to 285 (VETWEISKIY…DEGYEVVLKG (238 aa)) is the ABC transporter domain. Residue 87–94 (GPNGAGKT) coordinates ATP.

Belongs to the ABC transporter superfamily.

This is an uncharacterized protein from Synechocystis sp. (strain ATCC 27184 / PCC 6803 / Kazusa).